The chain runs to 389 residues: LL-diaminopimelate aminotransferase (389 aa).

Residues tyrosine 13 and glycine 38 each coordinate substrate. Pyridoxal 5'-phosphate is bound by residues tyrosine 67, 101–102, tyrosine 126, asparagine 176, tyrosine 207, and 235–237; these read SK and SLS. Substrate contacts are provided by lysine 102, tyrosine 126, and asparagine 176. An N6-(pyridoxal phosphate)lysine modification is found at lysine 238. Arginine 246 is a binding site for pyridoxal 5'-phosphate. Arginine 364 is a substrate binding site.

It belongs to the class-I pyridoxal-phosphate-dependent aminotransferase family. LL-diaminopimelate aminotransferase subfamily. Homodimer. Pyridoxal 5'-phosphate serves as cofactor.

It carries out the reaction (2S,6S)-2,6-diaminopimelate + 2-oxoglutarate = (S)-2,3,4,5-tetrahydrodipicolinate + L-glutamate + H2O + H(+). The protein operates within amino-acid biosynthesis; L-lysine biosynthesis via DAP pathway; LL-2,6-diaminopimelate from (S)-tetrahydrodipicolinate (aminotransferase route): step 1/1. Its function is as follows. Involved in the synthesis of meso-diaminopimelate (m-DAP or DL-DAP), required for both lysine and peptidoglycan biosynthesis. Catalyzes the direct conversion of tetrahydrodipicolinate to LL-diaminopimelate. The polypeptide is LL-diaminopimelate aminotransferase (Halothermothrix orenii (strain H 168 / OCM 544 / DSM 9562)).